The following is a 492-amino-acid chain: 2,3-bisphosphoglycerate-independent phosphoglycerate mutase (492 aa).

The Mn(2+) site is built by D11 and S61. The Phosphoserine intermediate role is filled by S61. Substrate contacts are provided by residues H118, 147 to 148, R177, R183, 248 to 251, and K321; these read RD and RSDR. Mn(2+) is bound by residues D387, H391, D428, H429, and H446.

It belongs to the BPG-independent phosphoglycerate mutase family. In terms of assembly, monomer. The cofactor is Mn(2+).

The enzyme catalyses (2R)-2-phosphoglycerate = (2R)-3-phosphoglycerate. It participates in carbohydrate degradation; glycolysis; pyruvate from D-glyceraldehyde 3-phosphate: step 3/5. In terms of biological role, catalyzes the interconversion of 2-phosphoglycerate and 3-phosphoglycerate. The polypeptide is 2,3-bisphosphoglycerate-independent phosphoglycerate mutase (Wolinella succinogenes (strain ATCC 29543 / DSM 1740 / CCUG 13145 / JCM 31913 / LMG 7466 / NCTC 11488 / FDC 602W) (Vibrio succinogenes)).